Reading from the N-terminus, the 141-residue chain is Hemoglobin subunit alpha (141 aa).

Positions 1–141 constitute a Globin domain; sequence VLSPADKSNV…VSTVLTSKYR (141 aa). Serine 3 carries the post-translational modification Phosphoserine. 2 positions are modified to N6-succinyllysine: lysine 7 and lysine 11. Lysine 16 is modified (N6-acetyllysine; alternate). Lysine 16 is modified (N6-succinyllysine; alternate). Tyrosine 24 carries the phosphotyrosine modification. A Phosphoserine modification is found at serine 35. Lysine 40 carries the N6-succinyllysine modification. Serine 49 is subject to Phosphoserine. Histidine 58 contacts O2. Position 87 (histidine 87) interacts with heme b. Serine 102 carries the post-translational modification Phosphoserine. A Phosphothreonine modification is found at threonine 108. Phosphoserine occurs at positions 124 and 131. 2 positions are modified to phosphothreonine: threonine 134 and threonine 137. Serine 138 carries the post-translational modification Phosphoserine.

Belongs to the globin family. In terms of assembly, heterotetramer of two alpha chains and two beta chains. In terms of tissue distribution, red blood cells.

Involved in oxygen transport from the lung to the various peripheral tissues. In terms of biological role, hemopressin acts as an antagonist peptide of the cannabinoid receptor CNR1. Hemopressin-binding efficiently blocks cannabinoid receptor CNR1 and subsequent signaling. The protein is Hemoglobin subunit alpha (HBA) of Saguinus mystax (Moustached tamarin).